The primary structure comprises 252 residues: tRNA pseudouridine synthase A (252 aa).

The active-site Nucleophile is Asp51. Tyr105 is a substrate binding site.

This sequence belongs to the tRNA pseudouridine synthase TruA family.

The enzyme catalyses uridine(38/39/40) in tRNA = pseudouridine(38/39/40) in tRNA. Formation of pseudouridine at positions 38, 39 and 40 in the anticodon stem and loop of transfer RNAs. This Thermoplasma acidophilum (strain ATCC 25905 / DSM 1728 / JCM 9062 / NBRC 15155 / AMRC-C165) protein is tRNA pseudouridine synthase A.